Consider the following 691-residue polypeptide: Transcription termination factor Rho (691 aa).

Residues 48–303 form a disordered region; the sequence is ISDHQRGGSV…PEVDETELTE (256 aa). The segment covering 50–64 has biased composition (basic and acidic residues); sequence DHQRGGSVADRDAAE. 2 stretches are compositionally biased toward low complexity: residues 65-92 and 105-119; these read RAAQAPAAPAAETAPAAASSEDAAPAAE and DTSAPAAAQDGQPQA. Basic and acidic residues-rich tracts occupy residues 120 to 158 and 188 to 273; these read EAREAQTEQAPRETASDQDRSGGSEARDEGEDRPQSERR and DADR…EGGR. The Rho RNA-BD domain maps to 307-390; that stretch reads LQPVAGILDV…VKISSVNGQP (84 aa). Residues 433–438, 445–450, and Arg-476 each bind ATP; these read GKGQRG and KAGKTM.

Belongs to the Rho family. As to quaternary structure, homohexamer. The homohexamer assembles into an open ring structure.

Facilitates transcription termination by a mechanism that involves Rho binding to the nascent RNA, activation of Rho's RNA-dependent ATPase activity, and release of the mRNA from the DNA template. The sequence is that of Transcription termination factor Rho from Micrococcus luteus (Micrococcus lysodeikticus).